Here is a 66-residue protein sequence, read N- to C-terminus: COP-associated protein (66 aa).

Positions 1 to 66 (MKVTFQVPSI…ALLDAGQEVV (66 aa)) constitute an HMA domain. The Cu cation site is built by C12 and C15.

Part of a cation-transporting system which is associated with copper export out of the H.pylori cells. In Helicobacter pylori (strain J99 / ATCC 700824) (Campylobacter pylori J99), this protein is COP-associated protein (copP).